The primary structure comprises 449 residues: UNC93-like protein MFSD11 (449 aa).

The helical transmembrane segment at 8 to 28 (LFNIVILGVAFMFMFTAFQTC) threads the bilayer. N-linked (GlcNAc...) asparagine glycosylation occurs at asparagine 40. The next 5 helical transmembrane spans lie at 53–73 (AIIY…VAIV), 74–94 (GPQI…AVFI), 96–116 (PFPW…AVLW), 138–158 (IFWA…YFAW), and 170–190 (RTVF…FFLI). Serine 204 is modified (phosphoserine). Transmembrane regions (helical) follow at residues 239-259 (MLLL…FSGV), 277-297 (LIGL…SLFG), 309-329 (PVVL…FLNM), 359-379 (FLLG…LGFL), 385-405 (APAF…AFFY), and 410-430 (LLHW…ISFF).

The protein belongs to the unc-93 family. As to expression, widely expressed.

Its subcellular location is the membrane. This Mus musculus (Mouse) protein is UNC93-like protein MFSD11 (Mfsd11).